Consider the following 270-residue polypeptide: Orotidine 5'-phosphate decarboxylase (270 aa).

Substrate contacts are provided by residues Asp-41, 63–65 (KTH), 95–104 (DRKFADIGNT), Tyr-221, and Arg-239. Lys-97 (proton donor) is an active-site residue.

This sequence belongs to the OMP decarboxylase family.

It catalyses the reaction orotidine 5'-phosphate + H(+) = UMP + CO2. It participates in pyrimidine metabolism; UMP biosynthesis via de novo pathway; UMP from orotate: step 2/2. This Candida boidinii (Yeast) protein is Orotidine 5'-phosphate decarboxylase (URA3).